Consider the following 257-residue polypeptide: Deoxyribose-phosphate aldolase (257 aa).

Aspartate 102 serves as the catalytic Proton donor/acceptor. Lysine 166 serves as the catalytic Schiff-base intermediate with acetaldehyde. The active-site Proton donor/acceptor is the lysine 198.

The protein belongs to the DeoC/FbaB aldolase family. DeoC type 2 subfamily.

Its subcellular location is the cytoplasm. It carries out the reaction 2-deoxy-D-ribose 5-phosphate = D-glyceraldehyde 3-phosphate + acetaldehyde. It participates in carbohydrate degradation; 2-deoxy-D-ribose 1-phosphate degradation; D-glyceraldehyde 3-phosphate and acetaldehyde from 2-deoxy-alpha-D-ribose 1-phosphate: step 2/2. Catalyzes a reversible aldol reaction between acetaldehyde and D-glyceraldehyde 3-phosphate to generate 2-deoxy-D-ribose 5-phosphate. In Shewanella woodyi (strain ATCC 51908 / MS32), this protein is Deoxyribose-phosphate aldolase.